The chain runs to 429 residues: Glutamate dehydrogenase B (429 aa).

The tract at residues 1 to 20 (MAQTPPPESAPSTDSEPETA) is disordered. K119 is an active-site residue.

This sequence belongs to the Glu/Leu/Phe/Val dehydrogenases family. Homohexamer.

The polypeptide is Glutamate dehydrogenase B (gdhB) (Halobacterium salinarum (strain ATCC 700922 / JCM 11081 / NRC-1) (Halobacterium halobium)).